The chain runs to 465 residues: Glutamate--tRNA ligase (465 aa).

The short motif at 5–15 is the 'HIGH' region element; the sequence is PSPTGMFHVGG. Positions 96, 98, 118, and 120 each coordinate Zn(2+). The short motif at 228 to 232 is the 'KMSKS' region element; it reads KLSKR. Lys231 contributes to the ATP binding site.

It belongs to the class-I aminoacyl-tRNA synthetase family. Glutamate--tRNA ligase type 1 subfamily. As to quaternary structure, monomer. Requires Zn(2+) as cofactor.

Its subcellular location is the cytoplasm. It carries out the reaction tRNA(Glu) + L-glutamate + ATP = L-glutamyl-tRNA(Glu) + AMP + diphosphate. Catalyzes the attachment of glutamate to tRNA(Glu) in a two-step reaction: glutamate is first activated by ATP to form Glu-AMP and then transferred to the acceptor end of tRNA(Glu). The polypeptide is Glutamate--tRNA ligase (Salinispora tropica (strain ATCC BAA-916 / DSM 44818 / JCM 13857 / NBRC 105044 / CNB-440)).